The chain runs to 85 residues: MSLLDYFKSKKKPSTAVMAKERLQIIVAHQRGQRDTPDYFPQMKQEIIAVIRKYVQISDDQVSVQLDQNDANLSVLELNVTLPDR.

The protein belongs to the MinE family.

Its function is as follows. Prevents the cell division inhibition by proteins MinC and MinD at internal division sites while permitting inhibition at polar sites. This ensures cell division at the proper site by restricting the formation of a division septum at the midpoint of the long axis of the cell. The chain is Cell division topological specificity factor from Shewanella baltica (strain OS223).